A 215-amino-acid chain; its full sequence is Small ribosomal subunit protein uS3 (215 aa).

Residues 38–107 (IRDYIKKTYH…KFQLNIEEVK (70 aa)) form the KH type-2 domain.

The protein belongs to the universal ribosomal protein uS3 family. In terms of assembly, part of the 30S ribosomal subunit. Forms a tight complex with proteins S10 and S14.

Its function is as follows. Binds the lower part of the 30S subunit head. Binds mRNA in the 70S ribosome, positioning it for translation. This Kosmotoga olearia (strain ATCC BAA-1733 / DSM 21960 / TBF 19.5.1) protein is Small ribosomal subunit protein uS3.